The following is a 1674-amino-acid chain: E3 ubiquitin-protein ligase SHPRH (1674 aa).

The segment at methionine 1–histidine 26 is disordered. The span at lysine 12–histidine 26 shows a compositional bias: basic and acidic residues. Residues serine 259 and serine 261 each carry the phosphoserine modification. Positions tyrosine 302–threonine 384 constitute a Helicase ATP-binding; first part domain. ATP is bound at residue aspartate 368–threonine 375. The 75-residue stretch at histidine 433–lysine 507 folds into the H15 domain. Positions serine 524–asparagine 548 are disordered. A compositionally biased stretch (basic and acidic residues) spans arginine 526–aspartate 541. Serine 626 is modified (phosphoserine). A PHD-type zinc finger spans residues arginine 649–alanine 700. Positions methionine 701–glutamate 859 constitute a Helicase ATP-binding; second part domain. The DEAQ box motif lies at aspartate 810 to glutamine 813. Residues cysteine 1423–arginine 1470 form an RING-type zinc finger. The 159-residue stretch at alanine 1505–alanine 1663 folds into the Helicase C-terminal domain.

It belongs to the SNF2/RAD54 helicase family. As to quaternary structure, homodimer. Interacts with HLTF, PCNA, UBE2N and RAD18. In terms of tissue distribution, broadly expressed (at protein level).

It carries out the reaction S-ubiquitinyl-[E2 ubiquitin-conjugating enzyme]-L-cysteine + [acceptor protein]-L-lysine = [E2 ubiquitin-conjugating enzyme]-L-cysteine + N(6)-ubiquitinyl-[acceptor protein]-L-lysine.. The protein operates within protein modification; protein ubiquitination. E3 ubiquitin-protein ligase involved in DNA repair. Upon genotoxic stress, accepts ubiquitin from the UBE2N-UBE2V2 E2 complex and transfers it to 'Lys-164' of PCNA which had been monoubiquitinated by UBE2A/B-RAD18, promoting the formation of non-canonical poly-ubiquitin chains linked through 'Lys-63'. This is E3 ubiquitin-protein ligase SHPRH (Shprh) from Mus musculus (Mouse).